The following is a 159-amino-acid chain: Transcription elongation factor GreA (159 aa).

Residues 47–77 (SENAEYDAARDKQATIENEITEIQHILDNYE) are a coiled coil.

Belongs to the GreA/GreB family.

Necessary for efficient RNA polymerase transcription elongation past template-encoded arresting sites. The arresting sites in DNA have the property of trapping a certain fraction of elongating RNA polymerases that pass through, resulting in locked ternary complexes. Cleavage of the nascent transcript by cleavage factors such as GreA or GreB allows the resumption of elongation from the new 3'terminus. GreA releases sequences of 2 to 3 nucleotides. The protein is Transcription elongation factor GreA of Metamycoplasma arthritidis (strain 158L3-1) (Mycoplasma arthritidis).